The chain runs to 245 residues: Complement C1q subcomponent subunit A (245 aa).

The first 22 residues, 1 to 22 (METSQGWLVACVLTMTLVWTVA), serve as a signal peptide directing secretion. Residues 28 to 114 (APNGKDGAPG…NPGNIRDQPR (87 aa)) are disordered. A Collagen-like domain is found at 31–109 (GKDGAPGNPG…KGVKGNPGNI (79 aa)). 2 positions are modified to 4-hydroxyproline: Pro39 and Pro45. Lys48 carries the 5-hydroxylysine modification. An O-linked (Gal...) hydroxylysine; alternate glycan is attached at Lys48. The residue at position 54 (Pro54) is a 4-hydroxyproline. Lys67 is subject to 5-hydroxylysine. Residue Lys67 is glycosylated (O-linked (Gal...) hydroxylysine; alternate). A 4-hydroxyproline mark is found at Pro79 and Pro85. Residues 79 to 99 (PGNVGLPGPSGPLGDSGPQGL) are compositionally biased toward low complexity. Lys100 is modified (5-hydroxylysine). The O-linked (Gal...) hydroxylysine; alternate glycan is linked to Lys100. The C1q domain occupies 110–245 (RDQPRPAFSA…FSGFLIFPSA (136 aa)). N-linked (GlcNAc...) asparagine glycosylation occurs at Asn146. Residue Gln199 participates in Ca(2+) binding.

As to quaternary structure, core component of the complement C1 complex, a calcium-dependent complex composed of 1 molecule of the C1Q subcomplex, 2 molecules of C1R and 2 molecules of C1S. The C1Q subcomplex is composed 18 subunits: 3 chains of C1QA, C1QB, and C1QC trimerize to form 6 collagen-like triple helices connected to six globular ligand-recognition modules (C1q domain). Interacts with CR1 (via Sushi 24 and Sushi 25 domains). Interacts (via C-terminus) with CD33; this interaction activates CD33 inhibitory motifs. In terms of processing, O-linked glycans are assumed to be the Glc-Gal disaccharides typically found as secondary modifications of hydroxylated lysines in collagen-like domains.

It is found in the secreted. It localises to the cell surface. Its activity is regulated as follows. The C1Q subcomplex is inhibited by sulfated molecules, such as triterpenoid sulfates, heparan sulfate, or chondroitin sulfates. In terms of biological role, core component of the complement C1 complex, a multiprotein complex that initiates the classical pathway of the complement system, a cascade of proteins that leads to phagocytosis and breakdown of pathogens and signaling that strengthens the adaptive immune system. The classical complement pathway is initiated by the C1Q subcomplex of the C1 complex, which specifically binds IgG or IgM immunoglobulins complexed with antigens, forming antigen-antibody complexes on the surface of pathogens: C1QA, together with C1QB and C1QC, specifically recognizes and binds the Fc regions of IgG or IgM via its C1q domain. Immunoglobulin-binding activates the proenzyme C1R, which cleaves C1S, initiating the proteolytic cascade of the complement system. The C1Q subcomplex is activated by a hexamer of IgG complexed with antigens, while it is activated by a pentameric IgM. The C1Q subcomplex also recognizes and binds phosphatidylserine exposed on the surface of cells undergoing programmed cell death, possibly promoting activation of the complement system. In Mus musculus (Mouse), this protein is Complement C1q subcomponent subunit A.